We begin with the raw amino-acid sequence, 143 residues long: Mannitol-specific phosphotransferase enzyme IIA component (143 aa).

The region spanning 2–142 (QVLAKENIKL…EDLIAIFNEV (141 aa)) is the PTS EIIA type-2 domain. His-62 functions as the Tele-phosphohistidine intermediate in the catalytic mechanism. Residue His-62 is modified to Phosphohistidine; by HPr. Position 74 is a phosphoserine (Ser-74).

Its subcellular location is the cytoplasm. Functionally, the phosphoenolpyruvate-dependent sugar phosphotransferase system (sugar PTS), a major carbohydrate active transport system, catalyzes the phosphorylation of incoming sugar substrates concomitantly with their translocation across the cell membrane. The enzyme II CmtAB PTS system is involved in D-mannitol transport. The polypeptide is Mannitol-specific phosphotransferase enzyme IIA component (mtlF) (Bacillus subtilis (strain 168)).